The sequence spans 453 residues: Kynureninase (453 aa).

Residues Leu-114, Thr-115, 142 to 145, Asp-232, His-235, and Tyr-257 each bind pyridoxal 5'-phosphate; that span reads FPSD. Position 258 is an N6-(pyridoxal phosphate)lysine (Lys-258). Residue Trp-286 coordinates pyridoxal 5'-phosphate.

Belongs to the kynureninase family. Homodimer. Pyridoxal 5'-phosphate serves as cofactor.

Its subcellular location is the cytoplasm. It carries out the reaction L-kynurenine + H2O = anthranilate + L-alanine + H(+). The catalysed reaction is 3-hydroxy-L-kynurenine + H2O = 3-hydroxyanthranilate + L-alanine + H(+). The protein operates within amino-acid degradation; L-kynurenine degradation; L-alanine and anthranilate from L-kynurenine: step 1/1. It participates in cofactor biosynthesis; NAD(+) biosynthesis; quinolinate from L-kynurenine: step 2/3. Catalyzes the cleavage of L-kynurenine (L-Kyn) and L-3-hydroxykynurenine (L-3OHKyn) into anthranilic acid (AA) and 3-hydroxyanthranilic acid (3-OHAA), respectively. This is Kynureninase from Cryptococcus neoformans var. neoformans serotype D (strain JEC21 / ATCC MYA-565) (Filobasidiella neoformans).